The following is a 644-amino-acid chain: Exoribonuclease 2 (644 aa).

Residues 189 to 516 enclose the RNB domain; that stretch reads RQDLTALNFV…NHRLLKAVIK (328 aa). The S1 motif domain maps to 561-643; sequence NTRFAAEIID…ETRSIIARPA (83 aa).

The protein belongs to the RNR ribonuclease family. RNase II subfamily.

The protein localises to the cytoplasm. It catalyses the reaction Exonucleolytic cleavage in the 3'- to 5'-direction to yield nucleoside 5'-phosphates.. Its function is as follows. Involved in mRNA degradation. Hydrolyzes single-stranded polyribonucleotides processively in the 3' to 5' direction. This chain is Exoribonuclease 2, found in Salmonella paratyphi B (strain ATCC BAA-1250 / SPB7).